We begin with the raw amino-acid sequence, 660 residues long: Transcription activator of gluconeogenesis CHGG_09150 (660 aa).

Acidic residues predominate over residues 1–12 (MSDSENEYDETD). The disordered stretch occupies residues 1 to 52 (MSDSENEYDETDQLVKEEDEKMSDQRLTSEGADTSAEPKKKYDPKDPLRPRR). 2 stretches are compositionally biased toward basic and acidic residues: residues 13–24 (QLVKEEDEKMSD) and 36–49 (AEPKKKYDPKDPLR). A DNA-binding region (zn(2)-C6 fungal-type) is located at residues 59 to 87 (CFACQRAHLTCGDERPCQRCIKRNLMESC). 3 disordered regions span residues 98 to 144 (LHDA…TFFS), 170 to 191 (FANQQSPTSPSFQTSGNPQISG), and 319 to 368 (PTSI…RQSN). The segment covering 129 to 144 (SIQTSEASSNQGTFFS) has biased composition (polar residues). The segment covering 173–184 (QQSPTSPSFQTS) has biased composition (low complexity). Composition is skewed to polar residues over residues 320–332 (TSIQSPSTDTNSP) and 344–368 (TMATFSTTPGSKPANQQRPSTRQSN). Residues 455-526 (SLLEYEEFMH…NSKARVGLAT (72 aa)) form the PAS domain. The interval 587 to 613 (APDKDDGTGESSTDGQLPQKDPRNSIL) is disordered.

The protein belongs to the ERT1/acuK family.

The protein resides in the nucleus. Transcription factor which regulates nonfermentable carbon utilization. Activator of gluconeogenetic genes. This is Transcription activator of gluconeogenesis CHGG_09150 from Chaetomium globosum (strain ATCC 6205 / CBS 148.51 / DSM 1962 / NBRC 6347 / NRRL 1970) (Soil fungus).